A 511-amino-acid polypeptide reads, in one-letter code: Piperic acid synthase CYP719A37 (511 aa).

The chain crosses the membrane as a helical span at residues valine 7–leucine 27. A heme-binding site is contributed by cysteine 455.

Belongs to the cytochrome P450 family. Heme serves as cofactor. In terms of tissue distribution, specifically expressed in immature fruits and roots. Barely detectable in young leaves and flowering spadices.

The protein resides in the membrane. The protein localises to the endoplasmic reticulum membrane. It catalyses the reaction (E,E)-feruperate + reduced [NADPH--hemoprotein reductase] + O2 = (E,E)-piperate + oxidized [NADPH--hemoprotein reductase] + 2 H2O + H(+). It participates in aromatic compound metabolism. Cytochrome P450 monooxygenase involved in the biosynthesis of aromatic piperamides natural products such as piperine (1-piperoyl-piperidine), the pungent principle contributing, together with several terpenoids, to the aromatic properties of black pepper fruits, and displaying numerous pharmacological activities such as antiproliferative, antitumor, antiangiogenesis, antioxidant, antidiabetic, antiobesity, cardioprotective, antimicrobial, antiaging, and immunomodulatory effects. Catalyzes the conversion of feruperic acid (5-(4-hydroxy-3-methoxyphenyl)-2,4-pentadienoic acid) to piperic acid. Inactive toward ferulic acid and feruperine. In Piper nigrum (Black pepper), this protein is Piperic acid synthase CYP719A37.